We begin with the raw amino-acid sequence, 712 residues long: Eukaryotic translation initiation factor 3 subunit B (712 aa).

Positions 1–98 (MSLTEAEYHE…LFVQFETSEM (98 aa)) are sufficient for interaction with HCR1 and TIF32. Residues 1 to 224 (MSLTEAEYHE…GVQSWGGADF (224 aa)) form a sufficient for interaction with PIC8 region. The region spanning 37 to 124 (NYVVVDGAPI…HRLLVNRLSD (88 aa)) is the RRM domain. WD repeat units follow at residues 191–229 (RKFF…SIDK), 230–293 (FMHN…RTFA), 301–339 (QKEM…LLDK), 342–384 (IKID…QTAR), 452–493 (ELKE…DFYA), 513–555 (ITDK…SNKN), and 566–604 (DKFS…YEFT).

It belongs to the eIF-3 subunit B family. In terms of assembly, component of the eukaryotic translation initiation factor 3 (eIF-3) complex.

It localises to the cytoplasm. RNA-binding component of the eukaryotic translation initiation factor 3 (eIF-3) complex, which is involved in protein synthesis of a specialized repertoire of mRNAs and, together with other initiation factors, stimulates binding of mRNA and methionyl-tRNAi to the 40S ribosome. The eIF-3 complex specifically targets and initiates translation of a subset of mRNAs involved in cell proliferation. The polypeptide is Eukaryotic translation initiation factor 3 subunit B (Scheffersomyces stipitis (strain ATCC 58785 / CBS 6054 / NBRC 10063 / NRRL Y-11545) (Yeast)).